The following is a 58-amino-acid chain: Potassium channel toxin alpha-KTx 26.2 (58 aa).

The first 19 residues, 1–19, serve as a signal peptide directing secretion; sequence MKTIFVVILVLFVLSAMLA. Intrachain disulfides connect Cys31-Cys49, Cys35-Cys54, and Cys39-Cys56.

The protein belongs to the short scorpion toxin superfamily. Potassium channel inhibitor family. Alpha-KTx 26 subfamily. Expressed by the venom gland.

It localises to the secreted. Its function is as follows. Inhibits voltage-gated potassium channels. The sequence is that of Potassium channel toxin alpha-KTx 26.2 from Lychas mucronatus (Chinese swimming scorpion).